A 111-amino-acid polypeptide reads, in one-letter code: Cytochrome c-550 (111 aa).

Residues Cys-13, Cys-16, His-17, and Met-90 each contribute to the heme c site.

In terms of processing, binds 1 heme c group covalently per subunit.

The sequence is that of Cytochrome c-550 from Novispirillum itersonii (Aquaspirillum itersonii).